A 413-amino-acid chain; its full sequence is Multifunctional CCA protein (413 aa).

ATP is bound by residues Gly-8 and Arg-11. Gly-8 and Arg-11 together coordinate CTP. Mg(2+) contacts are provided by Asp-21 and Asp-23. The ATP site is built by Arg-91, Arg-143, and Arg-146. Residues Arg-91, Arg-143, and Arg-146 each contribute to the CTP site. The region spanning 232 to 333 (TGVHVMMVVD…VRFFERTDAL (102 aa)) is the HD domain.

The protein belongs to the tRNA nucleotidyltransferase/poly(A) polymerase family. Bacterial CCA-adding enzyme type 1 subfamily. In terms of assembly, monomer. Can also form homodimers and oligomers. Mg(2+) is required as a cofactor. The cofactor is Ni(2+).

It catalyses the reaction a tRNA precursor + 2 CTP + ATP = a tRNA with a 3' CCA end + 3 diphosphate. The enzyme catalyses a tRNA with a 3' CCA end + 2 CTP + ATP = a tRNA with a 3' CCACCA end + 3 diphosphate. Catalyzes the addition and repair of the essential 3'-terminal CCA sequence in tRNAs without using a nucleic acid template. Adds these three nucleotides in the order of C, C, and A to the tRNA nucleotide-73, using CTP and ATP as substrates and producing inorganic pyrophosphate. tRNA 3'-terminal CCA addition is required both for tRNA processing and repair. Also involved in tRNA surveillance by mediating tandem CCA addition to generate a CCACCA at the 3' terminus of unstable tRNAs. While stable tRNAs receive only 3'-terminal CCA, unstable tRNAs are marked with CCACCA and rapidly degraded. This is Multifunctional CCA protein from Burkholderia multivorans (strain ATCC 17616 / 249).